We begin with the raw amino-acid sequence, 236 residues long: tRNA1(Val) (adenine(37)-N6)-methyltransferase (236 aa).

It belongs to the methyltransferase superfamily. tRNA (adenine-N(6)-)-methyltransferase family.

It localises to the cytoplasm. It carries out the reaction adenosine(37) in tRNA1(Val) + S-adenosyl-L-methionine = N(6)-methyladenosine(37) in tRNA1(Val) + S-adenosyl-L-homocysteine + H(+). Specifically methylates the adenine in position 37 of tRNA(1)(Val) (anticodon cmo5UAC). This Histophilus somni (strain 129Pt) (Haemophilus somnus) protein is tRNA1(Val) (adenine(37)-N6)-methyltransferase.